We begin with the raw amino-acid sequence, 49 residues long: DNA-directed RNA polymerase subunit Rpo12 (49 aa).

Zn(2+)-binding residues include C11, C27, and C30.

It belongs to the archaeal Rpo12/eukaryotic RPC10 RNA polymerase subunit family. In terms of assembly, part of the RNA polymerase complex. It depends on Zn(2+) as a cofactor.

The protein localises to the cytoplasm. The enzyme catalyses RNA(n) + a ribonucleoside 5'-triphosphate = RNA(n+1) + diphosphate. In terms of biological role, DNA-dependent RNA polymerase (RNAP) catalyzes the transcription of DNA into RNA using the four ribonucleoside triphosphates as substrates. The polypeptide is DNA-directed RNA polymerase subunit Rpo12 (Thermococcus onnurineus (strain NA1)).